Reading from the N-terminus, the 181-residue chain is MRIDKNLPNYLTIARIMVIPVIILAFYINNSLARKLGALLFVLASITDFFDGYIARKYNLVTSFGKMFDPIADKLLIGCVIIMLLKKDNVDEIPCLLILAREFLVSGLREFLALVKVSVPVSRLAKVKTFLQMFALSILILGSKGSGIIYLDIVGEIILWIAAFLTIITGYSYFKACKKYF.

4 consecutive transmembrane segments (helical) span residues 8 to 28 (PNYL…AFYI), 35 to 55 (KLGA…GYIA), 64 to 84 (FGKM…IIML), and 148 to 168 (IIYL…LTII).

This sequence belongs to the CDP-alcohol phosphatidyltransferase class-I family.

It localises to the cell membrane. It catalyses the reaction a CDP-1,2-diacyl-sn-glycerol + sn-glycerol 3-phosphate = a 1,2-diacyl-sn-glycero-3-phospho-(1'-sn-glycero-3'-phosphate) + CMP + H(+). Its pathway is phospholipid metabolism; phosphatidylglycerol biosynthesis; phosphatidylglycerol from CDP-diacylglycerol: step 1/2. Its function is as follows. This protein catalyzes the committed step to the synthesis of the acidic phospholipids. This Rickettsia felis (strain ATCC VR-1525 / URRWXCal2) (Rickettsia azadi) protein is CDP-diacylglycerol--glycerol-3-phosphate 3-phosphatidyltransferase (pgsA).